We begin with the raw amino-acid sequence, 252 residues long: Probable transcriptional regulatory protein Ava_1228 (252 aa).

Belongs to the TACO1 family.

It localises to the cytoplasm. The sequence is that of Probable transcriptional regulatory protein Ava_1228 from Trichormus variabilis (strain ATCC 29413 / PCC 7937) (Anabaena variabilis).